A 339-amino-acid chain; its full sequence is MKEKLEAIKEKALNELKSAVDKKNIEEIRVKYLGKKGELTQILRGMGALSSEERPIIGKLANEVRSKLESLIVEASEKIKDAEKKTRLESEIIDISMPGKRQTIGHRHPTYLTLNKVENIFRDMGFVIEEGPEVEYDKYNFEMLNIPKNHPARGEQDTFYINDNVVLRTQTSPVQVRTMLNQKPPIKMISPGKVYRSDAADATHSPIFYQVEGLVVDKGITFADLKGTLETFAKKMFGENVKMKFRPHHFPFTEPSAESDVTCFACGGEGCRVCKGEGWIELWGCGMVHPNVLRNCGIDPEVYSGFAFGMGLDRIVMLNYGIDDIRQLYESDMRFLKQF.

Glu-254 contacts Mg(2+).

The protein belongs to the class-II aminoacyl-tRNA synthetase family. Phe-tRNA synthetase alpha subunit type 1 subfamily. As to quaternary structure, tetramer of two alpha and two beta subunits. The cofactor is Mg(2+).

The protein resides in the cytoplasm. It catalyses the reaction tRNA(Phe) + L-phenylalanine + ATP = L-phenylalanyl-tRNA(Phe) + AMP + diphosphate + H(+). This chain is Phenylalanine--tRNA ligase alpha subunit, found in Clostridium acetobutylicum (strain ATCC 824 / DSM 792 / JCM 1419 / IAM 19013 / LMG 5710 / NBRC 13948 / NRRL B-527 / VKM B-1787 / 2291 / W).